Consider the following 648-residue polypeptide: Cysteine-rich receptor-like protein kinase 38 (648 aa).

The N-terminal stretch at 1–25 (MKNSAAIFLTSSLILLLQTLHGVKA) is a signal peptide. Gnk2-homologous domains are found at residues 26 to 127 (GFIC…DQST) and 140 to 247 (PSPV…FYPF). Over 26 to 278 (GFICVGSSFP…EAISITRLKG (253 aa)) the chain is Extracellular. Asn37, Asn63, Asn151, Asn174, and Asn253 each carry an N-linked (GlcNAc...) asparagine glycan. A helical transmembrane segment spans residues 279–299 (GIIAIFVVPIVINLLVFIGLI). Residues 300–648 (RAYTRIRKSY…ELSITELSPR (349 aa)) lie on the Cytoplasmic side of the membrane. The region spanning 339 to 611 (FSFENKIGQG…VIQWLGSETI (273 aa)) is the Protein kinase domain. ATP contacts are provided by residues 345-353 (IGQGGFGSV) and Lys367. Tyr412 carries the post-translational modification Phosphotyrosine. The active-site Proton acceptor is Asp464. Position 468 is a phosphoserine (Ser468). The residue at position 504 (Thr504) is a Phosphothreonine. The residue at position 512 (Tyr512) is a Phosphotyrosine.

It belongs to the protein kinase superfamily. Ser/Thr protein kinase family. CRK subfamily.

Its subcellular location is the membrane. The catalysed reaction is L-seryl-[protein] + ATP = O-phospho-L-seryl-[protein] + ADP + H(+). It catalyses the reaction L-threonyl-[protein] + ATP = O-phospho-L-threonyl-[protein] + ADP + H(+). The protein is Cysteine-rich receptor-like protein kinase 38 (CRK38) of Arabidopsis thaliana (Mouse-ear cress).